Consider the following 887-residue polypeptide: 3-hydroxy-3-methylglutaryl-coenzyme A reductase (887 aa).

Over 1–9 (MLSRLFRMH) the chain is Cytoplasmic. The helical transmembrane segment at 10 to 39 (GLFVASHPWEVIVGTVTLTICMMSMNMFTG) threads the bilayer. Topologically, residues 40 to 56 (NNKICGWNYECPKFEED) are lumenal. Residues 57-78 (VLSSDIIILTITRCIAILYIYF) form a helical membrane-spanning segment. Residues 61-218 (DIIILTITRC…MTFFPACVSL (158 aa)) form the SSD domain. The INSIG-binding motif motif lies at 75–78 (YIYF). Over 79 to 89 (QFQNLRQLGSK) the chain is Cytoplasmic. Lys89 participates in a covalent cross-link: Glycyl lysine isopeptide (Lys-Gly) (interchain with G-Cter in ubiquitin). The helical transmembrane segment at 90–114 (YILGIAGLFTIFSSFVFSTVVIHFL) threads the bilayer. The Lumenal segment spans residues 115–123 (DKELTGLNE). A helical membrane pass occupies residues 124-149 (ALPFFLLLIDLSRASALAKFALSSNS). Residues 150-159 (QDEVRENIAR) are Cytoplasmic-facing. A helical membrane pass occupies residues 160–187 (GMAILGPTFTLDALVECLVIGVGTMSGV). Residues 188 to 191 (RQLE) are Lumenal-facing. Residues 192–220 (IMCCFGCMSVLANYFVFMTFFPACVSLVL) form a helical membrane-spanning segment. Residues 221–248 (ELSRESREGRPIWQLSHFARVLEEEENK) are Cytoplasmic-facing. Lys248 participates in a covalent cross-link: Glycyl lysine isopeptide (Lys-Gly) (interchain with G-Cter in ubiquitin). A helical transmembrane segment spans residues 249–275 (PNPVTQRVKMIMSLGLVLVHAHSRWIA). The Lumenal portion of the chain corresponds to 276-314 (DPSPQNSTAEQAKVSLGLDEDVSKRIEPSVSLWQFYLSK). An N-linked (GlcNAc...) asparagine glycan is attached at Asn281. A helical membrane pass occupies residues 315-339 (MISMDIEQVITLSLAFLLAVKYIFF). Topologically, residues 340-887 (EQAETESTLS…LQGTCTKKAA (548 aa)) are cytoplasmic. Active-site charge relay system residues include Glu558, Lys690, and Asp766. Residue His865 is the Proton donor of the active site. Ser871 carries the phosphoserine modification.

This sequence belongs to the HMG-CoA reductase family. As to quaternary structure, homotetramer. Homodimer. Interacts (via its SSD) with INSIG1; the interaction, accelerated by sterols, leads to the recruitment of HMGCR to AMFR/gp78 for its ubiquitination by the sterol-mediated ERAD pathway. Interacts with UBIAD1. Post-translationally, undergoes sterol-mediated ubiquitination and ER-associated degradation (ERAD). Accumulation of sterols in the endoplasmic reticulum (ER) membrane, triggers binding of the reductase to the ER membrane protein INSIG1 or INSIG2. The INSIG1 binding leads to the recruitment of the ubiquitin ligase, AMFR/gp78, RNF139 or RNF145, initiating ubiquitination of the reductase. The ubiquitinated reductase is then extracted from the ER membrane and delivered to cytosolic 26S proteosomes by a mechanism probably mediated by the ATPase Valosin-containing protein VCP/p97. The INSIG2-binding leads to the recruitment of the ubiquitin ligase RNF139, initiating ubiquitination of the reductase. Lys-248 is the main site of ubiquitination. Ubiquitination is enhanced by the presence of a geranylgeranylated protein. N-glycosylated. Deglycosylated by NGLY1 on release from the endoplasmic reticulum (ER) in a sterol-mediated manner. In terms of processing, phosphorylated. Phosphorylation at Ser-871 reduces the catalytic activity.

It is found in the endoplasmic reticulum membrane. The protein localises to the peroxisome membrane. It catalyses the reaction (R)-mevalonate + 2 NADP(+) + CoA = (3S)-3-hydroxy-3-methylglutaryl-CoA + 2 NADPH + 2 H(+). It participates in metabolic intermediate biosynthesis; (R)-mevalonate biosynthesis; (R)-mevalonate from acetyl-CoA: step 3/3. Its activity is regulated as follows. Regulated by a negative feedback mechanism through sterols and non-sterol metabolites derived from mevalonate. Phosphorylation at Ser-871 down-regulates the catalytic activity. Functionally, catalyzes the conversion of (3S)-hydroxy-3-methylglutaryl-CoA (HMG-CoA) to mevalonic acid, the rate-limiting step in the synthesis of cholesterol and other isoprenoids, thus plays a critical role in cellular cholesterol homeostasis. The chain is 3-hydroxy-3-methylglutaryl-coenzyme A reductase (Hmgcr) from Mus musculus (Mouse).